The chain runs to 382 residues: Glutamyl-tRNA reductase (382 aa).

Substrate is bound by residues 38 to 41, Ser85, 90 to 92, and Gln96; these read TCNR and ENQ. Cys39 acts as the Nucleophile in catalysis. Residue 164 to 169 participates in NADP(+) binding; the sequence is GAGEIG.

Belongs to the glutamyl-tRNA reductase family. Homodimer.

The enzyme catalyses (S)-4-amino-5-oxopentanoate + tRNA(Glu) + NADP(+) = L-glutamyl-tRNA(Glu) + NADPH + H(+). The protein operates within porphyrin-containing compound metabolism; protoporphyrin-IX biosynthesis; 5-aminolevulinate from L-glutamyl-tRNA(Glu): step 1/2. Catalyzes the NADPH-dependent reduction of glutamyl-tRNA(Glu) to glutamate 1-semialdehyde (GSA). This chain is Glutamyl-tRNA reductase, found in Methanococcus maripaludis (strain C7 / ATCC BAA-1331).